We begin with the raw amino-acid sequence, 271 residues long: Ribonuclease 3 (271 aa).

Positions 5-139 (PALLELKLDY…IMAAIYLDGG (135 aa)) constitute an RNase III domain. Glutamate 52 provides a ligand contact to Mg(2+). Residue aspartate 56 is part of the active site. 2 residues coordinate Mg(2+): aspartate 125 and glutamate 128. Residue glutamate 128 is part of the active site. Residues 172–241 (NFKSALQELA…ARGLYERLMG (70 aa)) form the DRBM domain. The tract at residues 241 to 271 (GDPIVPLPDDSPGDSPDDSGDAAESGVISAT) is disordered. Acidic residues predominate over residues 251-261 (SPGDSPDDSGD).

Belongs to the ribonuclease III family. As to quaternary structure, homodimer. Mg(2+) serves as cofactor.

It is found in the cytoplasm. It carries out the reaction Endonucleolytic cleavage to 5'-phosphomonoester.. Functionally, digests double-stranded RNA. Involved in the processing of primary rRNA transcript to yield the immediate precursors to the large and small rRNAs (23S and 16S). Processes some mRNAs, and tRNAs when they are encoded in the rRNA operon. Processes pre-crRNA and tracrRNA of type II CRISPR loci if present in the organism. The chain is Ribonuclease 3 from Solibacter usitatus (strain Ellin6076).